Reading from the N-terminus, the 88-residue chain is Toxin RelE3 (88 aa).

Belongs to the RelE toxin family. In terms of assembly, forms heterodimers with RelB3 and possibly a heterotetramer RelE3-RelB3(2)-RelE3 from 2 heterodimers. The heterotetramer is probably not very stable in solution.

Its function is as follows. Toxic component of a type II toxin-antitoxin (TA) system. Has RNase activity. Is very toxic upon expression in E.coli. Its toxic activity is probably neutralized by the cognate antitoxin RelB3. This is Toxin RelE3 (relE3) from Methanocaldococcus jannaschii (strain ATCC 43067 / DSM 2661 / JAL-1 / JCM 10045 / NBRC 100440) (Methanococcus jannaschii).